Consider the following 345-residue polypeptide: Protein TRIGALACTOSYLDIACYLGLYCEROL 3, chloroplastic (345 aa).

The transit peptide at 1-46 (MLSLSCSSSSSSLLPPSLHYHGSSSVQSIVVPRRSLISFRRKVSCC) directs the protein to the chloroplast. Positions 85–336 (IECRDVYKSF…TNPIVQQFAT (252 aa)) constitute an ABC transporter domain. Residue 117 to 124 (GPSGTGKS) participates in ATP binding.

Belongs to the ABC transporter superfamily. ABCI family. Catalytic subunit of the TGD complex, a lipid translocator at the inner chloroplast envelope membrane made of TGD1, TGD2 and TGD3. Interacts with TGD1 and TGD2 with an overall subunit stoichiometry of 2 TGD1, 2 TGD3 and 8 to 12 TGD2. Interacts with TGD5.

Its subcellular location is the plastid. It is found in the chloroplast stroma. In terms of biological role, ATPase transporter involved in lipid transfer from the endoplasmic reticulum (ER) to plastids, and necessary for thylakoids formation. Not involved in transition metal transport pathways. The sequence is that of Protein TRIGALACTOSYLDIACYLGLYCEROL 3, chloroplastic from Arabidopsis thaliana (Mouse-ear cress).